Here is a 775-residue protein sequence, read N- to C-terminus: Coiled-coil domain-containing protein 33 (775 aa).

2 disordered regions span residues 1–23 (MGRQ…LDPY) and 68–87 (EANN…PTRA). The span at 7–18 (KVPEEPQDRLDT) shows a compositional bias: basic and acidic residues. In terms of domain architecture, C2 spans 12-141 (PQDRLDTSLD…RAFHPYHFEL (130 aa)). Residues 71 to 84 (NHSPQARTSVTSEP) are compositionally biased toward polar residues. Coiled-coil stretches lie at residues 414 to 561 (VEMN…ERKE) and 672 to 715 (DKFS…LQEQ). Residues 735 to 775 (RSQGSTTPRQNLKDEGYPGNIERPLQTHLTPGTRDIRHHLR) form a disordered region.

This is Coiled-coil domain-containing protein 33 (Ccdc33) from Rattus norvegicus (Rat).